The chain runs to 183 residues: NADH-quinone oxidoreductase subunit B (183 aa).

[4Fe-4S] cluster-binding residues include Cys-60, Cys-61, Cys-125, and Cys-154.

This sequence belongs to the complex I 20 kDa subunit family. In terms of assembly, NDH-1 is composed of 14 different subunits. Subunits NuoB, C, D, E, F, and G constitute the peripheral sector of the complex. [4Fe-4S] cluster serves as cofactor.

Its subcellular location is the cell inner membrane. It carries out the reaction a quinone + NADH + 5 H(+)(in) = a quinol + NAD(+) + 4 H(+)(out). Functionally, NDH-1 shuttles electrons from NADH, via FMN and iron-sulfur (Fe-S) centers, to quinones in the respiratory chain. The immediate electron acceptor for the enzyme in this species is believed to be ubiquinone. Couples the redox reaction to proton translocation (for every two electrons transferred, four hydrogen ions are translocated across the cytoplasmic membrane), and thus conserves the redox energy in a proton gradient. The protein is NADH-quinone oxidoreductase subunit B of Desulfovibrio desulfuricans (strain ATCC 27774 / DSM 6949 / MB).